The chain runs to 332 residues: Arabinogalactan endo-beta-1,4-galactanase (332 aa).

N-linked (GlcNAc...) asparagine glycosylation is present at asparagine 111. Catalysis depends on glutamate 135, which acts as the Proton donor. The Nucleophile role is filled by glutamate 245.

It belongs to the glycosyl hydrolase 53 family.

The enzyme catalyses The enzyme specifically hydrolyzes (1-&gt;4)-beta-D-galactosidic linkages in type I arabinogalactans.. This chain is Arabinogalactan endo-beta-1,4-galactanase, found in Thermothelomyces thermophilus (Myceliophthora thermophila).